We begin with the raw amino-acid sequence, 130 residues long: Methylglyoxal synthase (130 aa).

In terms of domain architecture, MGS-like spans Met1–Cys130. Substrate is bound by residues His11, Lys15, Thr37–Thr40, and Ser57–Gly58. Asp63 acts as the Proton donor/acceptor in catalysis. Residue His90 participates in substrate binding.

It belongs to the methylglyoxal synthase family.

The catalysed reaction is dihydroxyacetone phosphate = methylglyoxal + phosphate. Functionally, catalyzes the formation of methylglyoxal from dihydroxyacetone phosphate. This is Methylglyoxal synthase from Burkholderia ambifaria (strain MC40-6).